A 671-amino-acid chain; its full sequence is DNA ligase (671 aa).

Residues 32 to 36, 81 to 82, and E113 contribute to the NAD(+) site; these read DAEYD and SL. K115 acts as the N6-AMP-lysine intermediate in catalysis. NAD(+) contacts are provided by R136, E173, K290, and K314. 4 residues coordinate Zn(2+): C408, C411, C426, and C432. Positions 593–671 constitute a BRCT domain; sequence EIDSPFAGKT…EAEMMRLLGE (79 aa).

It belongs to the NAD-dependent DNA ligase family. LigA subfamily. Mg(2+) is required as a cofactor. It depends on Mn(2+) as a cofactor.

It catalyses the reaction NAD(+) + (deoxyribonucleotide)n-3'-hydroxyl + 5'-phospho-(deoxyribonucleotide)m = (deoxyribonucleotide)n+m + AMP + beta-nicotinamide D-nucleotide.. Functionally, DNA ligase that catalyzes the formation of phosphodiester linkages between 5'-phosphoryl and 3'-hydroxyl groups in double-stranded DNA using NAD as a coenzyme and as the energy source for the reaction. It is essential for DNA replication and repair of damaged DNA. The polypeptide is DNA ligase (Klebsiella pneumoniae (strain 342)).